The sequence spans 438 residues: MAIITDVYAREVLDSRGNPTLEVEVYTESGAFGRGMVPSGASTGEHEAVELRDGDKSRYGGLGTQKAVDNVNNVIAEAIIGYDVRDQQAIDRAMIALDGTPNKGKLGANAILGVSIAVARAAADYLEVPLYSYLGGFNTKVLPTPMMNIINGGSHSDAPIAFQEFMIMPVGAPTFKEALRWGAEVFHALKKILKERGLETAVGDEGGFAPKFEGTEDGVETILKAIEAAGYEAGENGIMIGFDCASSEFYDAERKVYDYSKFEGEGGAVRTAAEQIDYLEELVNKYPIITIEDGMDENDWDGWKALTERLGGRVQLVGDDFFVTNTDYLARGIKEEAANSILIKVNQIGTLTETFEAIEMAKEAGYTAVVSHRSGETEDSTIADIAVATNAGQIKTGSLSRTDRIAKYNQLLRIEDQLGEVAQYKGIKSFYNLDKCGR.

Glutamine 163 lines the (2R)-2-phosphoglycerate pocket. Residue glutamate 205 is the Proton donor of the active site. Mg(2+)-binding residues include aspartate 243, glutamate 292, and aspartate 319. Residues lysine 344, arginine 373, serine 374, and lysine 395 each contribute to the (2R)-2-phosphoglycerate site. The active-site Proton acceptor is the lysine 344.

It belongs to the enolase family. The cofactor is Mg(2+).

The protein localises to the cytoplasm. The protein resides in the secreted. It localises to the cell surface. It carries out the reaction (2R)-2-phosphoglycerate = phosphoenolpyruvate + H2O. It participates in carbohydrate degradation; glycolysis; pyruvate from D-glyceraldehyde 3-phosphate: step 4/5. Its function is as follows. Catalyzes the reversible conversion of 2-phosphoglycerate (2-PG) into phosphoenolpyruvate (PEP). It is essential for the degradation of carbohydrates via glycolysis. This chain is Enolase, found in Streptococcus agalactiae.